The sequence spans 159 residues: Crossover junction endodeoxyribonuclease RuvC (159 aa).

Active-site residues include D7, E67, and D139. Residues D7, E67, and D139 each coordinate Mg(2+).

It belongs to the RuvC family. Homodimer which binds Holliday junction (HJ) DNA. The HJ becomes 2-fold symmetrical on binding to RuvC with unstacked arms; it has a different conformation from HJ DNA in complex with RuvA. In the full resolvosome a probable DNA-RuvA(4)-RuvB(12)-RuvC(2) complex forms which resolves the HJ. Mg(2+) serves as cofactor.

It localises to the cytoplasm. It carries out the reaction Endonucleolytic cleavage at a junction such as a reciprocal single-stranded crossover between two homologous DNA duplexes (Holliday junction).. The RuvA-RuvB-RuvC complex processes Holliday junction (HJ) DNA during genetic recombination and DNA repair. Endonuclease that resolves HJ intermediates. Cleaves cruciform DNA by making single-stranded nicks across the HJ at symmetrical positions within the homologous arms, yielding a 5'-phosphate and a 3'-hydroxyl group; requires a central core of homology in the junction. The consensus cleavage sequence is 5'-(A/T)TT(C/G)-3'. Cleavage occurs on the 3'-side of the TT dinucleotide at the point of strand exchange. HJ branch migration catalyzed by RuvA-RuvB allows RuvC to scan DNA until it finds its consensus sequence, where it cleaves and resolves the cruciform DNA. The polypeptide is Crossover junction endodeoxyribonuclease RuvC (Orientia tsutsugamushi (strain Ikeda) (Rickettsia tsutsugamushi)).